The sequence spans 278 residues: Probable endonuclease 4 (278 aa).

Zn(2+) contacts are provided by histidine 69, histidine 109, glutamate 145, aspartate 179, histidine 182, histidine 216, aspartate 229, histidine 231, and glutamate 261.

The protein belongs to the AP endonuclease 2 family. The cofactor is Zn(2+).

The enzyme catalyses Endonucleolytic cleavage to 5'-phosphooligonucleotide end-products.. Endonuclease IV plays a role in DNA repair. It cleaves phosphodiester bonds at apurinic or apyrimidinic (AP) sites, generating a 3'-hydroxyl group and a 5'-terminal sugar phosphate. The polypeptide is Probable endonuclease 4 (Buchnera aphidicola subsp. Baizongia pistaciae (strain Bp)).